The following is a 919-amino-acid chain: Phosphoenolpyruvate carboxylase (919 aa).

Catalysis depends on residues H138 and K579.

It belongs to the PEPCase type 1 family. It depends on Mg(2+) as a cofactor.

The enzyme catalyses oxaloacetate + phosphate = phosphoenolpyruvate + hydrogencarbonate. In terms of biological role, forms oxaloacetate, a four-carbon dicarboxylic acid source for the tricarboxylic acid cycle. The polypeptide is Phosphoenolpyruvate carboxylase (ppc) (Corynebacterium efficiens (strain DSM 44549 / YS-314 / AJ 12310 / JCM 11189 / NBRC 100395)).